The sequence spans 456 residues: Protein translocase subunit SecY (456 aa).

The Cytoplasmic segment spans residues 1–21; it reads MEQLKEKFEPLFSVLPQVKSP. The helical transmembrane segment at 22 to 48 threads the bilayer; the sequence is GYRVPFREKLKWTGIILVLYFFLAQIP. Over 49 to 59 the chain is Extracellular; that stretch reads LYGLSANAVDQ. Residues 60–67 constitute an intramembrane region (helical); the sequence is FAQFRAVL. The discontinuously helical transmembrane segment at 60–88 threads the bilayer; it reads FAQFRAVLAGNFGSILTLGIGPIVSASII. An intramembrane segment occupies 68–79; that stretch reads AGNFGSILTLGI. Residues 80–88 constitute an intramembrane region (helical); sequence GPIVSASII. Residues 89–109 are Cytoplasmic-facing; sequence LQLLVGGKILKLDLSRHEDKA. The helical transmembrane segment at 110-134 threads the bilayer; it reads FFQGLQKLLAIVFTFFEALIFVLTG. The Extracellular segment spans residues 135 to 141; the sequence is SLAPSAP. A helical transmembrane segment spans residues 142-166; sequence QFVWVLILQLTIGGILIIFLDEVVS. Topologically, residues 167–172 are cytoplasmic; sequence KWGFGS. Residues 173-191 traverse the membrane as a helical segment; it reads GVGLFIAAGVSQEIIVGAF. Residues 192–224 are Extracellular-facing; sequence NPLSAPTQPGVPAGRITGFLYLLFTGQSPDFQY. A helical membrane pass occupies residues 225-246; it reads YVLPVLALIAVFLVVVYAESMR. The Cytoplasmic portion of the chain corresponds to 247-275; it reads VEIPISMGGGKRLSRGAVGKYPLRFIYAS. The chain crosses the membrane as a helical span at residues 276 to 297; that stretch reads NMPVILTSALLLNVQLLANVFQ. At 298–334 the chain is on the extracellular side; the sequence is KLGYPILGTVSNGQAVDGLAYLLTAPRSIDALILDPF. A helical membrane pass occupies residues 335 to 354; that stretch reads RVVFYAVVFIGLCVLFAWLW. Residues 355 to 397 are Cytoplasmic-facing; it reads VEISNIGPRHVARQLYQMGMQIPGFRSSRGQFEKILKRYIPTI. Residues 398–416 form a helical membrane-spanning segment; that stretch reads TILGGAFVGLLAFVADLTG. The Extracellular portion of the chain corresponds to 417–419; it reads SLG. A helical transmembrane segment spans residues 420 to 434; the sequence is GGTGVLLTVGIVYRL. Over 435-456 the chain is Cytoplasmic; it reads YEEIAQEQLMDMHPILRSFLGD.

It belongs to the SecY/SEC61-alpha family. As to quaternary structure, component of the Sec protein translocase complex. Heterotrimer consisting of alpha (SecY), beta (SecG) and gamma (SecE) subunits. The heterotrimers can form oligomers, although 1 heterotrimer is thought to be able to translocate proteins. Interacts with the ribosome. May interact with SecDF, and other proteins may be involved.

It is found in the cell membrane. Functionally, the central subunit of the protein translocation channel SecYEG. Consists of two halves formed by TMs 1-5 and 6-10. These two domains form a lateral gate at the front which open onto the bilayer between TMs 2 and 7, and are clamped together by SecE at the back. The channel is closed by both a pore ring composed of hydrophobic SecY resides and a short helix (helix 2A) on the extracellular side of the membrane which forms a plug. The plug probably moves laterally to allow the channel to open. The ring and the pore may move independently. The protein is Protein translocase subunit SecY of Methanothermobacter thermautotrophicus (strain ATCC 29096 / DSM 1053 / JCM 10044 / NBRC 100330 / Delta H) (Methanobacterium thermoautotrophicum).